A 150-amino-acid polypeptide reads, in one-letter code: Sulfur-rich protein, serovars L1/L3 (150 aa).

The interval 1–20 is disordered; that stretch reads MSTVPVVQGAGSSNSAQDIS. The next 2 helical transmembrane spans lie at 43-63 and 69-89; these read VGLV…VSAA and IYLA…ILSM.

The protein localises to the membrane. The polypeptide is Sulfur-rich protein, serovars L1/L3 (srp) (Chlamydia trachomatis).